The sequence spans 150 residues: UPF0756 membrane protein PM0771 (150 aa).

4 helical membrane passes run 12-34, 52-72, 79-99, and 123-143; these read LVVL…AAIL, HGIT…IVSG, LAVF…LVAW, and ILGV…AGIL.

It belongs to the UPF0756 family.

The protein resides in the cell membrane. This chain is UPF0756 membrane protein PM0771, found in Pasteurella multocida (strain Pm70).